Consider the following 520-residue polypeptide: GMP synthase [glutamine-hydrolyzing] (520 aa).

The 194-residue stretch at 9–202 (SVLIVDFGSQ…IHNIAGIKGD (194 aa)) folds into the Glutamine amidotransferase type-1 domain. Residue cysteine 86 is the Nucleophile of the active site. Residues histidine 176 and glutamate 178 contribute to the active site. In terms of domain architecture, GMPS ATP-PPase spans 203–395 (WSMSAYRQKA…LGLPDSFIGR (193 aa)). 230-236 (SGGVDSS) is an ATP binding site.

As to quaternary structure, homodimer.

It catalyses the reaction XMP + L-glutamine + ATP + H2O = GMP + L-glutamate + AMP + diphosphate + 2 H(+). It functions in the pathway purine metabolism; GMP biosynthesis; GMP from XMP (L-Gln route): step 1/1. Catalyzes the synthesis of GMP from XMP. The chain is GMP synthase [glutamine-hydrolyzing] from Rhizobium johnstonii (strain DSM 114642 / LMG 32736 / 3841) (Rhizobium leguminosarum bv. viciae).